We begin with the raw amino-acid sequence, 456 residues long: Protein ESC2 (456 aa).

Positions 1 to 24 (MTGDSRSISEPSINLDPDNTSFSD) are enriched in polar residues. The interval 1–154 (MTGDSRSISE…SSIRSISPAG (154 aa)) is disordered. Residues 25–43 (ENSDDFFMDNSYDIDEIDH) are compositionally biased toward acidic residues. Residues 83–93 (QSLSRSSSKNV) are compositionally biased toward polar residues. 3 positions are modified to phosphoserine: Ser-90, Ser-125, and Ser-126. The stretch at 169-287 (ENDDFFKELA…QDFENEVSDI (119 aa)) is one SUMO-like region 1 repeat. Positions 301–360 (EATLESKLKEEEAALLIKERQEMERKLEKKRNEQEESEYREFESELKNVEETQEIKENDT) form a coiled coil. Residues 380-456 (MEEVMRIALM…DEDMVDVIID (77 aa)) form an SUMO-like region 2 repeat.

In terms of assembly, component of a cullin-RING ligase (CRL)-like complex composed of at least the cullin RTT101, a linker protein MMS1, and the potential substrate receptor ESC2. Interacts with RTT101 and MMS1. Interacts with SIR2.

The protein localises to the cytoplasm. The protein resides in the nucleus. Its function is as follows. May be a substrate targeting component of a cullin-RING-based E3 ubiquitin-protein ligase complex RTT101(MMS1-ESC2). Involved in HMR and telomere silencing via the recruitment or stabilizing of the SIR (silent information regulators) complex. The chain is Protein ESC2 (ESC2) from Saccharomyces cerevisiae (strain ATCC 204508 / S288c) (Baker's yeast).